Here is a 57-residue protein sequence, read N- to C-terminus: uncharacterized protein (57 aa).

Residues 24–44 (LWVTLLLTMFFTAVEIIGGLI) form a helical membrane-spanning segment.

It to cation A.eutrophus efflux system protein CzcD.

The protein localises to the cell membrane. This is an uncharacterized protein from Bacillus caldolyticus.